A 465-amino-acid chain; its full sequence is Adenosylhomocysteinase (465 aa).

Substrate-binding residues include Thr-56, Asp-131, and Glu-191. 192–194 (TTT) is a binding site for NAD(+). Positions 221 and 225 each coordinate substrate. Residues Asn-226, 255 to 260 (GYGDVG), Glu-278, Asn-313, 334 to 336 (IGH), and Asn-379 each bind NAD(+).

Belongs to the adenosylhomocysteinase family. Requires NAD(+) as cofactor.

The protein localises to the cytoplasm. It carries out the reaction S-adenosyl-L-homocysteine + H2O = L-homocysteine + adenosine. Its pathway is amino-acid biosynthesis; L-homocysteine biosynthesis; L-homocysteine from S-adenosyl-L-homocysteine: step 1/1. Functionally, may play a key role in the regulation of the intracellular concentration of adenosylhomocysteine. The sequence is that of Adenosylhomocysteinase from Chelativorans sp. (strain BNC1).